We begin with the raw amino-acid sequence, 322 residues long: Germ cell-specific gene 1-like protein (322 aa).

The Cytoplasmic segment spans residues 1 to 8 (MKTSRRGR). A helical membrane pass occupies residues 9–29 (ALLAVALNLLALLFATTAFLT). Topologically, residues 30–122 (TYWCQGTQRV…FIDLAPASEK (93 aa)) are extracellular. Residues 123-143 (GVLWLSVVSEVLYILLLVVGF) form a helical membrane-spanning segment. Residues 144–163 (SLMCLELLHSSSVIDGLKLN) lie on the Cytoplasmic side of the membrane. Residues 164–184 (AFAAVFTVLSGLLGMVAHMMY) traverse the membrane as a helical segment. The Extracellular portion of the chain corresponds to 185–207 (TQVFQVTVSLGPEDWRPHSWDYG). The helical transmembrane segment at 208 to 228 (WSFCLAWGSFTCCMAASVTTL) threads the bilayer. The Cytoplasmic portion of the chain corresponds to 229 to 322 (NSYTKTVIEF…RQCWVLGHWV (94 aa)). Position 274 is a phosphoserine (S274).

This sequence belongs to the GSG1 family. In terms of assembly, component of the inner core of AMPAR complexes. AMPAR complexes consist of an inner core made of 4 pore-forming GluA/GRIA proteins (GRIA1, GRIA2, GRIA3 and GRIA4) and 4 major auxiliary subunits arranged in a twofold symmetry. One of the two pairs of distinct binding sites is occupied either by CNIH2, CNIH3 or CACNG2, CACNG3. The other harbors CACNG2, CACNG3, CACNG4, CACNG8 or GSG1L. This inner core of AMPAR complexes is complemented by outer core constituents binding directly to the GluA/GRIA proteins at sites distinct from the interaction sites of the inner core constituents. Outer core constituents include at least PRRT1, PRRT2, CKAMP44/SHISA9, FRRS1L and NRN1. The proteins of the inner and outer core serve as a platform for other, more peripherally associated AMPAR constituents. Alone or in combination, these auxiliary subunits control the gating and pharmacology of the AMPAR complexes and profoundly impact their biogenesis and protein processing. Expressed in the brain (at protein level).

It localises to the cell membrane. It is found in the synapse. In terms of biological role, as a component of the inner core of AMPAR complexes, modifies AMPA receptor (AMPAR) gating. This chain is Germ cell-specific gene 1-like protein (Gsg1l), found in Rattus norvegicus (Rat).